Consider the following 77-residue polypeptide: Teretoxin Tsu15.4 (77 aa).

The first 21 residues, 1–21, serve as a signal peptide directing secretion; the sequence is MTKLTVLLLAILVLLPLATSN. The propeptide occupies 22 to 40; that stretch reads SAADEALASLSGLLRRAKR.

Post-translationally, contains 4 disulfide bonds. Expressed by the venom duct.

It localises to the secreted. The chain is Teretoxin Tsu15.4 from Terebra subulata (Chocolate spotted auger).